We begin with the raw amino-acid sequence, 602 residues long: Elongation factor 4 (602 aa).

The tr-type G domain occupies Asp-6 to Lys-188. GTP-binding positions include Asp-18–Thr-23 and Asn-135–Asp-138.

The protein belongs to the TRAFAC class translation factor GTPase superfamily. Classic translation factor GTPase family. LepA subfamily.

Its subcellular location is the cell inner membrane. The enzyme catalyses GTP + H2O = GDP + phosphate + H(+). Its function is as follows. Required for accurate and efficient protein synthesis under certain stress conditions. May act as a fidelity factor of the translation reaction, by catalyzing a one-codon backward translocation of tRNAs on improperly translocated ribosomes. Back-translocation proceeds from a post-translocation (POST) complex to a pre-translocation (PRE) complex, thus giving elongation factor G a second chance to translocate the tRNAs correctly. Binds to ribosomes in a GTP-dependent manner. The polypeptide is Elongation factor 4 (Brucella anthropi (strain ATCC 49188 / DSM 6882 / CCUG 24695 / JCM 21032 / LMG 3331 / NBRC 15819 / NCTC 12168 / Alc 37) (Ochrobactrum anthropi)).